The sequence spans 167 residues: Urease accessory protein UreE (167 aa).

The segment at 137–167 (ARGAYHAHGGHSHGHDHGHSHGHDHHDHSHD) is disordered. Residues 149–167 (HGHDHGHSHGHDHHDHSHD) are compositionally biased toward basic and acidic residues.

It belongs to the UreE family.

The protein localises to the cytoplasm. Functionally, involved in urease metallocenter assembly. Binds nickel. Probably functions as a nickel donor during metallocenter assembly. This is Urease accessory protein UreE from Rhizobium rhizogenes (strain K84 / ATCC BAA-868) (Agrobacterium radiobacter).